Here is a 355-residue protein sequence, read N- to C-terminus: Protein RecA (355 aa).

67–74 (GPESSGKT) serves as a coordination point for ATP.

The protein belongs to the RecA family.

The protein resides in the cytoplasm. In terms of biological role, can catalyze the hydrolysis of ATP in the presence of single-stranded DNA, the ATP-dependent uptake of single-stranded DNA by duplex DNA, and the ATP-dependent hybridization of homologous single-stranded DNAs. It interacts with LexA causing its activation and leading to its autocatalytic cleavage. In Proteus mirabilis (strain HI4320), this protein is Protein RecA.